We begin with the raw amino-acid sequence, 327 residues long: Ribose 1,5-bisphosphate isomerase (327 aa).

Residues 25–28 (RGAA) and arginine 68 contribute to the substrate site. Cysteine 133 serves as the catalytic Proton acceptor. Aspartate 202 functions as the Proton donor in the catalytic mechanism. Residues 212-213 (NK) and lysine 238 each bind substrate.

The protein belongs to the eIF-2B alpha/beta/delta subunits family. R15P isomerase subfamily.

The enzyme catalyses alpha-D-ribose 1,5-bisphosphate = D-ribulose 1,5-bisphosphate. Isomerase involved in the non-carboxylating pentose bisphosphate pathway, a nucleoside degradation pathway present in some halophilic archaea. Catalyzes the isomerization of ribose 1,5-bisphosphate (R15P) to ribulose 1,5-bisphosphate (RuBP). In Haloterrigena turkmenica (strain ATCC 51198 / DSM 5511 / JCM 9101 / NCIMB 13204 / VKM B-1734 / 4k) (Halococcus turkmenicus), this protein is Ribose 1,5-bisphosphate isomerase.